The chain runs to 411 residues: Methyl-CpG-binding domain protein 2 (411 aa).

A required for interaction with DHX9 and PRMT5 region spans residues 1–149 (MRAHPGGGRC…GPRATESGKR (149 aa)). The segment at 1–158 (MRAHPGGGRC…RMDCPALPPG (158 aa)) is disordered. The span at 77 to 95 (GRGRGRGRGRGRGRGRGRG) shows a compositional bias: basic residues. The segment covering 98–121 (PSGGSGLGGDGGGCGGGGSGGGGA) has biased composition (gly residues). Residues 145-213 (ESGKRMDCPA…SSFDFRTGKM (69 aa)) form the MBD domain. Serine 181 is subject to Phosphoserine. Residues 214–241 (MPSKLQKNKQRLRNDPLNQNKGKPDLNT) are disordered. The segment covering 229–241 (PLNQNKGKPDLNT) has biased composition (polar residues). A Phosphoserine modification is found at serine 407.

As to quaternary structure, heterodimer with MBD3 (via N-terminus). Component of the MeCP1 complex that contains HDAC1 and HDAC2. Component of the nucleosome remodeling and deacetylase (NuRD) repressor complex, composed of core proteins MTA1, MTA2, MTA3, RBBP4, RBBP7, HDAC1, HDAC2, MBD2, MBD3, and peripherally associated proteins CDK2AP1, CDK2AP2, GATAD2A, GATAD2B, CHD3, CHD4 and CHD5. The exact stoichiometry of the NuRD complex is unknown, and some subunits such as MBD2 and MBD3, GATAD2A and GATAD2B, and CHD3, CHD4 and CHD5 define mutually exclusive NuRD complexes. Interacts with CDK2AP1. Interacts with DHX9. Interacts with DNMT1. Interacts with GATAD2A/p66-alpha. Interacts with GATAD2B/p66-beta. Interacts with GPN1. Interacts with MIZF. Interacts with PRMT5. Interacts with SIN3A. Interacts with SPHK2. Highly expressed in brain, heart, kidney, stomach, testis and placenta.

Its subcellular location is the nucleus. The protein resides in the chromosome. Functionally, binds CpG islands in promoters where the DNA is methylated at position 5 of cytosine within CpG dinucleotides. Binds hemimethylated DNA as well. Recruits histone deacetylases and DNA methyltransferases to chromatin. Acts as a component of the histone deacetylase NuRD complex which participates in the remodeling of chromatin. Acts as a transcriptional repressor and plays a role in gene silencing. Functions as a scaffold protein, targeting GATAD2A and GATAD2B to chromatin to promote repression. May enhance the activation of some unmethylated cAMP-responsive promoters. This chain is Methyl-CpG-binding domain protein 2, found in Homo sapiens (Human).